Here is a 754-residue protein sequence, read N- to C-terminus: Catalase-peroxidase (754 aa).

A disordered region spans residues 1–29; it reads MGTQPARKLRNRVFPHPHNHRKEKPMAND. The segment covering 7–23 has biased composition (basic residues); the sequence is RKLRNRVFPHPHNHRKE. Catalysis depends on tryptophan 106, which acts as the Tryptophan radical intermediate. The segment at residues 122-249 is a cross-link (tryptophyl-tyrosyl-methioninium (Trp-Tyr) (with M-275)); sequence WHAAGTYRIA…LAAVQMGLIY (128 aa). Catalysis depends on histidine 123, which acts as the Proton acceptor. The segment at residues 249–275 is a cross-link (tryptophyl-tyrosyl-methioninium (Tyr-Met) (with W-122)); sequence YVNPEGVDGHPDPLCTAQDVRTTFARM. Histidine 290 is a binding site for heme b.

The protein belongs to the peroxidase family. Peroxidase/catalase subfamily. Homodimer. Heme b serves as cofactor. Post-translationally, formation of the three residue Trp-Tyr-Met cross-link is important for the catalase, but not the peroxidase activity of the enzyme.

The catalysed reaction is H2O2 + AH2 = A + 2 H2O. It catalyses the reaction 2 H2O2 = O2 + 2 H2O. In terms of biological role, bifunctional enzyme with both catalase and broad-spectrum peroxidase activity. Also displays NADH oxidase, isoniazid hydrazine lyase and isonicotinoyl-NAD synthase activities. This chain is Catalase-peroxidase, found in Synechocystis sp. (strain ATCC 27184 / PCC 6803 / Kazusa).